The sequence spans 482 residues: Cardiolipin synthase (482 aa).

2 helical membrane-spanning segments follow: residues 4-24 (LAYLLVILLILNVFFAAVTVF) and 34-54 (WAWLLVLTFVPIFGFIIYLIF). PLD phosphodiesterase domains are found at residues 217-244 (LNYRNHRKLAIIDGDVGYIGGFNIGDEY) and 395-422 (DNGFIHAKTLVVDGEIASVGTANMDFRS). Active-site residues include His-222, Lys-224, Asp-229, His-400, Lys-402, and Asp-407.

It belongs to the phospholipase D family. Cardiolipin synthase subfamily.

The protein resides in the cell membrane. The enzyme catalyses 2 a 1,2-diacyl-sn-glycero-3-phospho-(1'-sn-glycerol) = a cardiolipin + glycerol. Its function is as follows. Catalyzes the reversible phosphatidyl group transfer from one phosphatidylglycerol molecule to another to form cardiolipin (CL) (diphosphatidylglycerol) and glycerol. In Listeria innocua serovar 6a (strain ATCC BAA-680 / CLIP 11262), this protein is Cardiolipin synthase (cls).